The sequence spans 764 residues: MVVKTYPLGMVGTNNGIAENEGDSGLEPYVGLEFDTAEEARDYYNSYATRTGFKVRTGQLYRSRTDGTVSSRRFVCSKEGFQLNSRTGCPAFIRVQRRDTGKWVLDQIQKEHNHDLGGHIEEAQTTPRPSVQQRAPAPTKLGISVPHRPKMKVVDEADKGRSCPSGVISFKRFKGAEDSDGQTQPKATEPYAGLEFNSANEACQFYQAYAEVVGFRVRIGQLFRSKVDGSITSRRFVCSKEGFQHPSRMGCGAYMRIKRQDSGGWIVDRLNKDHNHDLEPGKKNAGMKKITDDVTGGLDSVDLIELNDLSNHISSTRENTIGKEWYPVLLDYFQSKQAEDMGFFYAIELDSNGSCMSIFWADSRSRFACSQFGDAVVFDTSYRKGDYSVPFATFIGFNHHRQPVLLGGALVADESKEAFSWLFQTWLRAMSGRRPRSMVADQDLPIQQAVAQVFPGTHHRFSAWQIRSKERENLRSFPNEFKYEYEKCLYQSQTTVEFDTMWSSLVNKYGLRDNMWLREIYEKREKWVPAYLRASFFGGIHVDGTFDPFYGTSLNSLTSLREFISRYEQGLEQRREEERKEDFNSYNLQPFLQTKEPVEEQCRRLYTLTIFRIFQSELAQSYNYLGLKTYEEGAISRFLVRKCGNENEKHAVTFSASNLNASCSCQMFEYEGLLCRHILKVFNLLDIRELPSRYILHRWTKNAEFGFVRDVESGVTSQDLKALMIWSLREAASKYIEFGTSSLEKYKLAYEIMREGGKKLCWQR.

The region spanning 42-118 (DYYNSYATRT…QKEHNHDLGG (77 aa)) is the FAR1 1 domain. Residues 119 to 144 (HIEEAQTTPRPSVQQRAPAPTKLGIS) are disordered. The segment covering 123 to 133 (AQTTPRPSVQQ) has biased composition (polar residues). The region spanning 204 to 280 (QFYQAYAEVV…NKDHNHDLEP (77 aa)) is the FAR1 2 domain. Positions 375–471 (AVVFDTSYRK…SAWQIRSKER (97 aa)) constitute an MULE domain. The segment at 650-686 (HAVTFSASNLNASCSCQMFEYEGLLCRHILKVFNLLD) adopts an SWIM-type zinc-finger fold.

The protein belongs to the FHY3/FAR1 family. In terms of tissue distribution, expressed in hypocotyls, rosette and cauline leaves, inflorescences stems, flowers and siliques.

Its subcellular location is the nucleus. Functionally, putative transcription activator involved in regulating light control of development. The sequence is that of Protein FAR1-RELATED SEQUENCE 7 (FRS7) from Arabidopsis thaliana (Mouse-ear cress).